Here is a 46-residue protein sequence, read N- to C-terminus: Esculentin-1R (46 aa).

Cysteines 40 and 46 form a disulfide.

As to expression, expressed by the skin glands.

The protein resides in the secreted. Shows antibacterial activity against representative Gram-negative and Gram-positive bacterial species, and hemolytic activity. The protein is Esculentin-1R of Pelophylax ridibundus (Marsh frog).